The primary structure comprises 182 residues: Protein SrpB (182 aa).

4 consecutive transmembrane segments (helical) span residues 11–31 (WLGL…IGLN), 43–63 (TFTL…QAEG), 73–93 (LSRT…GLIL), and 116–136 (IWIT…LGLI).

Belongs to the MgtC/SapB family.

Its subcellular location is the cell membrane. The protein is Protein SrpB (srpB) of Synechococcus elongatus (strain ATCC 33912 / PCC 7942 / FACHB-805) (Anacystis nidulans R2).